A 626-amino-acid polypeptide reads, in one-letter code: Hemocyanin AA6 chain (626 aa).

The Cu cation site is built by His170, His174, His201, His321, His325, and His361. Ser374 bears the Phosphoserine mark.

This sequence belongs to the tyrosinase family. Hemocyanin subfamily. In terms of assembly, scorpion hemocyanin is a 24-chain polymer with 8 different chains identified, assembled in hexameric substructures. In terms of processing, three disulfide bonds are present. As to expression, hemolymph.

The protein resides in the secreted. Its subcellular location is the extracellular space. In terms of biological role, hemocyanins are copper-containing oxygen carriers occurring freely dissolved in the hemolymph of many mollusks and arthropods. In Androctonus australis (Sahara scorpion), this protein is Hemocyanin AA6 chain.